The primary structure comprises 41 residues: trp operon leader peptide (41 aa).

This protein is involved in control of the biosynthesis of tryptophan. The chain is trp operon leader peptide (trpL) from Vibrio parahaemolyticus serotype O3:K6 (strain RIMD 2210633).